Here is a 524-residue protein sequence, read N- to C-terminus: MVPQALLFVPLLVFPLCFGKFPIYTIPDKLGPWSPIDIHHLRCPNNLVVEDEGCTNLSGFSYMELKVGYISAIKVNGFTCTGVVTEAETYTNFVGYVTTTFKRKHFRPTPDACRAAYNWKMAGDPRYEESLHNPYPDYHWLRTVKTTKESLVIISPSVADLDPYDKSLHSRVFPSGNCSGITVSSTYCSTNHDYTIWMPENPRLETSCDIFTNSRGKRASKGSKTCGFVDERGLYKSLKGACKLKLCGVLGLRLMDGTWVAMQTSDETKWCPPDQLVNLHDFRSDEIEHLVVEELVKKREECLDALESIMTTKSVSLRRLSHLRKLVPGFGKAYTIFNKTLMEAEAHYKSVQTWNEIIPSKGCLRVGGRCHPHVNGVFFNGIILGPDGHVLIPEMQSSLLQQHMELLESSVIPLMHPLADPSTVFKDGDEAEDFVEVHLPDVHKQVSGVDLGLPNWGKYVLLSAGTLIALMLIIFLMTCCRRVNRPKSTERSLGETGRKVSVTSQSGKVISSWESYKSGGETRR.

The signal sequence occupies residues 1 to 19; that stretch reads MVPQALLFVPLLVFPLCFG. Over 20–459 the chain is Virion surface; sequence KFPIYTIPDK…DLGLPNWGKY (440 aa). 6 disulfide bridges follow: Cys43/Cys302, Cys54/Cys226, Cys80/Cys113, Cys178/Cys188, Cys208/Cys247, and Cys242/Cys271. Asn56 carries an N-linked (GlcNAc...) asparagine; by host glycan. Residue Asn177 is glycosylated (N-linked (GlcNAc...) asparagine; by host). Asn338 carries an N-linked (GlcNAc...) asparagine; by host glycan. Cys363 and Cys370 form a disulfide bridge. The chain crosses the membrane as a helical span at residues 460-480; that stretch reads VLLSAGTLIALMLIIFLMTCC. Residue Cys480 is the site of S-palmitoyl cysteine; by host attachment. Over 481–524 the chain is Intravirion; it reads RRVNRPKSTERSLGETGRKVSVTSQSGKVISSWESYKSGGETRR. Over residues 487–498 the composition is skewed to basic and acidic residues; it reads KSTERSLGETGR. Residues 487–509 are disordered; the sequence is KSTERSLGETGRKVSVTSQSGKV.

This sequence belongs to the lyssavirus glycoprotein family. In terms of assembly, homotrimer. Interacts with matrix protein. Interacts with host TRFC. Interacts with host BST2; this interaction inhibits viral budding by tethering new virions to the cell surface. Interacts with ITGB1. Interacts with host GRM2. In terms of processing, glycosylated and palmitoylated by host. Glycosylation is crucial for glycoprotein export at the cell surface.

The protein resides in the virion membrane. Its function is as follows. Attaches the virus to host cellular receptor, inducing endocytosis of the virion by using different host proteins including TFRC, GRM2 and ITGB1. In the endosome, the acidic pH induces conformational changes in the glycoprotein trimer, which trigger fusion between virus and cell membrane. There is convincing in vitro evidence that the muscular form of the nicotinic acetylcholine receptor (nAChR), the neuronal cell adhesion molecule (NCAM), and the p75 neurotrophin receptor (p75NTR) bind glycoprotein and thereby facilitate rabies virus entry into cells. In Rabies virus (isolate Human/Algeria/1991) (RABV), this protein is Glycoprotein (G).